A 794-amino-acid polypeptide reads, in one-letter code: MSFPKAPLKRFNDPSGCAPSPGAYDVKTSEATKGPVSFQKSQRFKNQRESQQNLNIDKDTTLLASAKKAKKSVSKKDSQKNDKDVKRLEKEIRALLQERGTQDKRIQDMESELEKTEAKLNAAVREKTSLSASNASLEKRLTELTRANELLKAKFSEDGHQKNMRALSLELMKLRNKRETKMRSMMVKQEGMELKLQATQKDLTESKGKIVQLEGKLVSIEKEKIDEKCETEKLLEYIQEISCASDQVEKCKVDIAQLEEDLKEKDREILSLKQSLEENITFSKQIEDLTVKCQLLETERDNLVSKDRERAETLSAEMQILTERLALERQEYEKLQQKELQSQSLLQQEKELSARLQQQLCSFQEEMTSEKNVFKEELKLALAELDAVQQKEEQSERLVKQLEEETKSTAEQLTRLDNLLREKEVELEKHIAAHAQAILIAQEKYNDTAQSLRDVTAQLESVQEKYNDTAQSLRDVTAQLESEQEKYNDTAQSLRDVTAQLESEQEKYNDTAQSLRDVTAQLESVQEKYNDTAQSLRDVTAQLESYKSSTLKEIEDLKLENLTLQEKVAMAEKSVEDVQQQILTAESTNQEYARMVQDLQNRSTLKEEEIKEITSSFLEKITDLKNQLRQQDEDFRKQLEEKGKRTAEKENVMTELTMEINKWRLLYEELYEKTKPFQQQLDAFEAEKQALLNEHGATQEQLNKIRDSYAQLLGHQNLKQKIKHVVKLKDENSQLKSEVSKLRSQLVKRKQNELRLQGELDKALGIRHFDPSKAFCHASKENFTPLKEGNPNCC.

The disordered stretch occupies residues 1–87; it reads MSFPKAPLKR…SQKNDKDVKR (87 aa). Phosphoserine is present on serine 20. Residues 74-87 show a composition bias toward basic and acidic residues; that stretch reads SKKDSQKNDKDVKR. N-linked (GlcNAc...) asparagine glycans are attached at residues asparagine 134, asparagine 279, asparagine 446, asparagine 467, asparagine 488, asparagine 509, asparagine 530, asparagine 561, and asparagine 601. The segment at 365–630 is required for interaction with FAM83D; that stretch reads EEMTSEKNVF…ITDLKNQLRQ (266 aa). A run of 5 repeats spans residues 442–462, 463–483, 484–504, 505–525, and 526–546. Residues 442–546 form a 5 X 21 AA tandem repeats region; it reads QEKYNDTAQS…RDVTAQLESY (105 aa). 2 hyaluronic acid-binding regions span residues 719–729 and 741–750; these read KQKIKHVVKLK and KLRSQLVKRK. Threonine 784 is modified (phosphothreonine).

As to quaternary structure, interacts with ANKRD26. Interacts with DYNLL1. Interacts with FAM83D/CHICA. Ubiquitously expressed.

The protein localises to the cell surface. The protein resides in the cytoplasm. Its subcellular location is the cytoskeleton. It is found in the spindle. In terms of biological role, receptor for hyaluronic acid (HA). Involved in cell motility. When hyaluronan binds to HMMR, the phosphorylation of a number of proteins, including the PTK2/FAK1 occurs. May also be involved in cellular transformation and metastasis formation, and in regulating extracellular-regulated kinase (ERK) activity. May act as a regulator of adipogenesis. The chain is Hyaluronan mediated motility receptor (Hmmr) from Mus musculus (Mouse).